Here is a 425-residue protein sequence, read N- to C-terminus: Pectate lyase L (425 aa).

The N-terminal stretch at 1-25 (MKYLNCFISTGLAAFFLVNSTSVLA) is a signal peptide. A disulfide bridge links Cys-28 with Cys-114. Asp-209, Asp-233, Asp-234, and Asp-237 together coordinate Ca(2+). The active-site Proton acceptor is the Lys-273. The Ca(2+) site is built by Asn-402, Ser-413, Ala-416, Asp-418, and Glu-423.

The protein belongs to the polysaccharide lyase 9 family. It depends on Ca(2+) as a cofactor.

It is found in the secreted. It carries out the reaction Eliminative cleavage of (1-&gt;4)-alpha-D-galacturonan to give oligosaccharides with 4-deoxy-alpha-D-galact-4-enuronosyl groups at their non-reducing ends.. Its pathway is glycan metabolism; pectin degradation; 2-dehydro-3-deoxy-D-gluconate from pectin: step 2/5. Its function is as follows. Presents an endo-cleaving activity on polygalacturonate or partially methylated pectin. The protein is Pectate lyase L (pelL) of Dickeya chrysanthemi (Pectobacterium chrysanthemi).